Here is a 379-residue protein sequence, read N- to C-terminus: MSKRDYYETLEVSQDASEKEIKKAYKKLAMKYHPDRTQGDKSKEETFKEVKEAYEILNDDQKRAAYDQYGHAAFEQGGHGGGGGGHGGGFGQDFGDIFGDIFGGGGGGGRGRQRQQRGSDLRYNVELSLEDAVKGKSLEIKVPTYVSCEPCDGSGAKKGTSAKTCSTCHGHGQVQMRQGLFAVQQTCPTCSGKGKVIADKCTSCRGQGRVEKTKTLSVKIPAGVDTGDRIRLSGEGEAGEHGAPAGDLYVQVNVRDHDIFVRDENHLYCEVPISFVTASLGGEIEVPTLGGKVKLKVPKETQTGKMFRLRGKGVKSVRSTSTGDLMCKVVIETPVNLSGDQADLLRQLEEKMASSSKKHSPKETGFFDGVKKFFDDLKS.

Positions 5–70 constitute a J domain; the sequence is DYYETLEVSQ…QKRAAYDQYG (66 aa). The segment at 135-213 adopts a CR-type zinc-finger fold; it reads GKSLEIKVPT…CRGQGRVEKT (79 aa). Zn(2+)-binding residues include C148, C151, C165, C168, C187, C190, C201, and C204. CXXCXGXG motif repeat units lie at residues 148-155, 165-172, 187-194, and 201-208; these read CEPCDGSG, CSTCHGHG, CPTCSGKG, and CTSCRGQG.

This sequence belongs to the DnaJ family. In terms of assembly, homodimer. Zn(2+) is required as a cofactor.

The protein localises to the cytoplasm. Its function is as follows. Participates actively in the response to hyperosmotic and heat shock by preventing the aggregation of stress-denatured proteins and by disaggregating proteins, also in an autonomous, DnaK-independent fashion. Unfolded proteins bind initially to DnaJ; upon interaction with the DnaJ-bound protein, DnaK hydrolyzes its bound ATP, resulting in the formation of a stable complex. GrpE releases ADP from DnaK; ATP binding to DnaK triggers the release of the substrate protein, thus completing the reaction cycle. Several rounds of ATP-dependent interactions between DnaJ, DnaK and GrpE are required for fully efficient folding. Also involved, together with DnaK and GrpE, in the DNA replication of plasmids through activation of initiation proteins. In Colwellia maris, this protein is Chaperone protein DnaJ.